A 359-amino-acid chain; its full sequence is Fe-S cluster assembly protein DRE2 (359 aa).

Residues 1–148 (MASTGRVLLL…KPDVAAQQAV (148 aa)) are N-terminal SAM-like domain. 2 disordered regions span residues 97–116 (NKAWGLRSSGNNSDDDNDND) and 149–210 (PLKL…PSGV). The linker stretch occupies residues 149 to 246 (PLKLGRRKKE…EDELLGEDDM (98 aa)). Residues 152-164 (LGRRKKEKERRHP) are compositionally biased toward basic residues. A compositionally biased stretch (polar residues) spans 167–183 (NDVTNGKVNAPSSNGVN). The span at 184–200 (ASTSTATATATTTTTTT) shows a compositional bias: low complexity. [2Fe-2S] cluster contacts are provided by Cys-256, Cys-267, Cys-270, and Cys-272. Residues 256-272 (CRPKPGKRRRACKDCSC) form a fe-S binding site A region. Residues Cys-322, Cys-325, Cys-333, and Cys-336 each contribute to the [4Fe-4S] cluster site. Short sequence motifs (cx2C motif) lie at residues 322-325 (CGNC) and 333-336 (CDGC). The segment at 322–336 (CGNCSLGDAFRCDGC) is fe-S binding site B.

Belongs to the anamorsin family. As to quaternary structure, monomer. Interacts with TAH18. Interacts with MIA40. [2Fe-2S] cluster is required as a cofactor. [4Fe-4S] cluster serves as cofactor.

It localises to the cytoplasm. Its subcellular location is the mitochondrion intermembrane space. Functionally, component of the cytosolic iron-sulfur (Fe-S) protein assembly (CIA) machinery required for the maturation of extramitochondrial Fe-S proteins. Part of an electron transfer chain functioning in an early step of cytosolic Fe-S biogenesis, facilitating the de novo assembly of a [4Fe-4S] cluster on the scaffold complex CFD1-NBP35. Electrons are transferred to DRE2 from NADPH via the FAD- and FMN-containing protein TAH18. TAH18-DRE2 are also required for the assembly of the diferric tyrosyl radical cofactor of ribonucleotide reductase (RNR), probably by providing electrons for reduction during radical cofactor maturation in the catalytic small subunit RNR2. This Blastomyces gilchristii (strain SLH14081) (Blastomyces dermatitidis) protein is Fe-S cluster assembly protein DRE2.